The following is a 243-amino-acid chain: Phosphoribosylaminoimidazole-succinocarboxamide synthase (243 aa).

Belongs to the SAICAR synthetase family.

It carries out the reaction 5-amino-1-(5-phospho-D-ribosyl)imidazole-4-carboxylate + L-aspartate + ATP = (2S)-2-[5-amino-1-(5-phospho-beta-D-ribosyl)imidazole-4-carboxamido]succinate + ADP + phosphate + 2 H(+). It participates in purine metabolism; IMP biosynthesis via de novo pathway; 5-amino-1-(5-phospho-D-ribosyl)imidazole-4-carboxamide from 5-amino-1-(5-phospho-D-ribosyl)imidazole-4-carboxylate: step 1/2. This is Phosphoribosylaminoimidazole-succinocarboxamide synthase from Methanobrevibacter smithii (strain ATCC 35061 / DSM 861 / OCM 144 / PS).